Here is a 269-residue protein sequence, read N- to C-terminus: tRNA (guanine-N(7)-)-methyltransferase (269 aa).

The disordered stretch occupies residues 1–38 (MDGVNDAANHTVESVPGRPSTASAPLEAGRRSPTGSRL). Glu-91, Glu-116, Asp-143, and Asp-166 together coordinate S-adenosyl-L-methionine. Asp-166 is an active-site residue. Residues Lys-170, Asp-202, and 247 to 250 (TKFE) each bind substrate.

This sequence belongs to the class I-like SAM-binding methyltransferase superfamily. TrmB family.

It carries out the reaction guanosine(46) in tRNA + S-adenosyl-L-methionine = N(7)-methylguanosine(46) in tRNA + S-adenosyl-L-homocysteine. The protein operates within tRNA modification; N(7)-methylguanine-tRNA biosynthesis. Its function is as follows. Catalyzes the formation of N(7)-methylguanine at position 46 (m7G46) in tRNA. This Nocardia farcinica (strain IFM 10152) protein is tRNA (guanine-N(7)-)-methyltransferase.